The primary structure comprises 148 residues: Glutaredoxin-C10 (148 aa).

Positions 16–55 (TLDLTVHPPPPPPLPPPAPSTVSSSTASTSLSFDEEETSE) are disordered. Residues 22–34 (HPPPPPPLPPPAP) show a composition bias toward pro residues. Low complexity predominate over residues 35–47 (STVSSSTASTSLS). The Glutaredoxin domain maps to 55–147 (ESKIGRLISE…PRLVEVGALW (93 aa)). Cys76 and Cys79 are oxidised to a cystine.

This sequence belongs to the glutaredoxin family. CC-type subfamily.

The protein localises to the cytoplasm. Its function is as follows. Has a glutathione-disulfide oxidoreductase activity in the presence of NADPH and glutathione reductase. Reduces low molecular weight disulfides and proteins. This Arabidopsis thaliana (Mouse-ear cress) protein is Glutaredoxin-C10 (GRXC10).